The sequence spans 101 residues: Small ribosomal subunit protein uS10 (101 aa).

The protein belongs to the universal ribosomal protein uS10 family. As to quaternary structure, part of the 30S ribosomal subunit.

Involved in the binding of tRNA to the ribosomes. This Corynebacterium efficiens (strain DSM 44549 / YS-314 / AJ 12310 / JCM 11189 / NBRC 100395) protein is Small ribosomal subunit protein uS10.